A 435-amino-acid polypeptide reads, in one-letter code: D-inositol 3-phosphate glycosyltransferase (435 aa).

His16 lines the 1D-myo-inositol 3-phosphate pocket. UDP-N-acetyl-alpha-D-glucosamine is bound by residues 22–23 (QP) and Gly30. 1D-myo-inositol 3-phosphate-binding positions include 27-32 (DAGGMN), Lys85, Tyr118, Thr142, and Arg162. Arg237, Lys242, and Val303 together coordinate UDP-N-acetyl-alpha-D-glucosamine. Residues Tyr312, Arg313, and Ala315 each coordinate Mg(2+). UDP-N-acetyl-alpha-D-glucosamine contacts are provided by Glu325 and Glu333. Thr339 provides a ligand contact to Mg(2+).

It belongs to the glycosyltransferase group 1 family. MshA subfamily. As to quaternary structure, homodimer.

The enzyme catalyses 1D-myo-inositol 3-phosphate + UDP-N-acetyl-alpha-D-glucosamine = 1D-myo-inositol 2-acetamido-2-deoxy-alpha-D-glucopyranoside 3-phosphate + UDP + H(+). Catalyzes the transfer of a N-acetyl-glucosamine moiety to 1D-myo-inositol 3-phosphate to produce 1D-myo-inositol 2-acetamido-2-deoxy-glucopyranoside 3-phosphate in the mycothiol biosynthesis pathway. The protein is D-inositol 3-phosphate glycosyltransferase of Kineococcus radiotolerans (strain ATCC BAA-149 / DSM 14245 / SRS30216).